Here is a 123-residue protein sequence, read N- to C-terminus: Transmembrane protein 80 (123 aa).

The next 4 helical transmembrane spans lie at 2–22 (LFHL…LMIV), 35–55 (LALD…QLYL), 68–88 (LAAS…FLLW), and 102–122 (VLLV…ADFI).

Its subcellular location is the membrane. The protein resides in the cell projection. The protein localises to the cilium. This chain is Transmembrane protein 80 (Tmem80), found in Mus musculus (Mouse).